The primary structure comprises 239 residues: Ribosomal RNA small subunit methyltransferase G (239 aa).

S-adenosyl-L-methionine contacts are provided by residues Gly78, Phe83, 129-130, and Arg148; that span reads AE.

Belongs to the methyltransferase superfamily. RNA methyltransferase RsmG family.

Its subcellular location is the cytoplasm. Its function is as follows. Specifically methylates the N7 position of a guanine in 16S rRNA. The polypeptide is Ribosomal RNA small subunit methyltransferase G (Clostridium botulinum (strain 657 / Type Ba4)).